A 57-amino-acid polypeptide reads, in one-letter code: Cecropin-A (57 aa).

The N-terminal stretch at 1 to 21 (IFFFVFACLLALSAVSAAPEP) is a signal peptide.

The protein belongs to the cecropin family.

The protein localises to the secreted. In terms of biological role, cecropins have lytic and antibacterial activity against several Gram-positive and Gram-negative bacteria. The sequence is that of Cecropin-A (CECA) from Spodoptera litura (Asian cotton leafworm).